The following is an 89-amino-acid chain: Cell division protein FtsL (89 aa).

Residues 1–6 (MAMNKL) are Cytoplasmic-facing. A helical transmembrane segment spans residues 7-24 (NFLLLLAVCVSAFSVVMQ). Residues 25-89 (QNQYRLNFTA…GNTFMVEHQR (65 aa)) are Periplasmic-facing. The stretch at 33 to 73 (TALDKAKKQEIALEQDYAQMRLQQARLANHEAIRAAAEKQN) forms a coiled coil.

It belongs to the FtsL family. As to quaternary structure, part of a complex composed of FtsB, FtsL and FtsQ.

The protein resides in the cell inner membrane. Functionally, essential cell division protein. May link together the upstream cell division proteins, which are predominantly cytoplasmic, with the downstream cell division proteins, which are predominantly periplasmic. This is Cell division protein FtsL from Neisseria meningitidis serogroup B (strain ATCC BAA-335 / MC58).